Consider the following 157-residue polypeptide: NADPH-dependent 7-cyano-7-deazaguanine reductase (157 aa).

The active-site Thioimide intermediate is the Cys55. Asp62 functions as the Proton donor in the catalytic mechanism. Substrate is bound by residues 77–79 (VES) and 96–97 (HE).

The protein belongs to the GTP cyclohydrolase I family. QueF type 1 subfamily.

The protein resides in the cytoplasm. It catalyses the reaction 7-aminomethyl-7-carbaguanine + 2 NADP(+) = 7-cyano-7-deazaguanine + 2 NADPH + 3 H(+). It functions in the pathway tRNA modification; tRNA-queuosine biosynthesis. Its function is as follows. Catalyzes the NADPH-dependent reduction of 7-cyano-7-deazaguanine (preQ0) to 7-aminomethyl-7-deazaguanine (preQ1). This Neisseria gonorrhoeae (strain ATCC 700825 / FA 1090) protein is NADPH-dependent 7-cyano-7-deazaguanine reductase.